The primary structure comprises 707 residues: Acetyl-coenzyme A synthetase 1 (707 aa).

Residues 242–245 and Thr361 contribute to the CoA site; that span reads RGGK. ATP is bound by residues 437–439, 461–466, Asp553, and Arg568; these read GEP and DTYWQT. Ser576 contributes to the CoA binding site. Arg579 lines the ATP pocket. Arg644 contributes to the CoA binding site. The Microbody targeting signal motif lies at 705 to 707; it reads VKL.

The protein belongs to the ATP-dependent AMP-binding enzyme family.

It is found in the microsome. It localises to the endoplasmic reticulum. The catalysed reaction is acetate + ATP + CoA = acetyl-CoA + AMP + diphosphate. Functionally, may be required for assimilation of ethanol and acetate. The sequence is that of Acetyl-coenzyme A synthetase 1 (ACS1) from Kluyveromyces lactis (strain ATCC 8585 / CBS 2359 / DSM 70799 / NBRC 1267 / NRRL Y-1140 / WM37) (Yeast).